The following is a 298-amino-acid chain: uncharacterized protein (298 aa).

An HTH araC/xylS-type domain is found at 194-295 (KRLNTALIAI…QLSPSQYRKS (102 aa)). DNA-binding regions (H-T-H motif) lie at residues 214-235 (EQLA…QQHI) and 262-285 (VLAI…KNYY).

This is an uncharacterized protein from Haemophilus influenzae (strain ATCC 51907 / DSM 11121 / KW20 / Rd).